A 276-amino-acid polypeptide reads, in one-letter code: Urease accessory protein UreD (276 aa).

Belongs to the UreD family. UreD, UreF and UreG form a complex that acts as a GTP-hydrolysis-dependent molecular chaperone, activating the urease apoprotein by helping to assemble the nickel containing metallocenter of UreC. The UreE protein probably delivers the nickel.

Its subcellular location is the cytoplasm. In terms of biological role, required for maturation of urease via the functional incorporation of the urease nickel metallocenter. The polypeptide is Urease accessory protein UreD (Polaromonas sp. (strain JS666 / ATCC BAA-500)).